The following is a 635-amino-acid chain: Arabinoxylan arabinofuranohydrolase (635 aa).

The first 26 residues, 1–26 (MIRKCLVLFLSFALLLSVFPMLNVDA), serve as a signal peptide directing secretion. Asp49 (proton acceptor) is an active-site residue. Catalysis depends on Glu248, which acts as the Proton donor. Asn311 contributes to the substrate binding site. CBM6 domains are found at residues 379-508 (TRVE…WQFT) and 517-634 (TKVE…IEFS). Ca(2+) contacts are provided by Glu382, Glu384, Asn406, Leu407, Asp503, Glu520, Glu522, Asp539, Tyr544, Asp620, Trp624, Asp625, and Asp629.

The protein belongs to the glycosyl hydrolase 43 family.

The protein localises to the secreted. The enzyme catalyses Hydrolysis of terminal non-reducing alpha-L-arabinofuranoside residues in alpha-L-arabinosides.. The protein operates within glycan degradation; xylan degradation. Activated by calcium and magnesium. Inhibited by copper. In terms of biological role, cleaves arabinose units from O-2- or O-3-monosubstituted xylose residues, thereby assisting in arabinoxylan (AX) and short-chain arabinoxylo-oligosaccharide (AXOS) degradation. Preferres wheat flour xylan over oat spelt xylan as substrate. Does not display endoxylanase activity. The polypeptide is Arabinoxylan arabinofuranohydrolase (xynD) (Paenibacillus polymyxa (Bacillus polymyxa)).